Reading from the N-terminus, the 466-residue chain is Argininosuccinate lyase (466 aa).

The protein belongs to the lyase 1 family. Argininosuccinate lyase subfamily.

It is found in the cytoplasm. The enzyme catalyses 2-(N(omega)-L-arginino)succinate = fumarate + L-arginine. The protein operates within amino-acid biosynthesis; L-arginine biosynthesis; L-arginine from L-ornithine and carbamoyl phosphate: step 3/3. This is Argininosuccinate lyase from Syntrophobacter fumaroxidans (strain DSM 10017 / MPOB).